We begin with the raw amino-acid sequence, 237 residues long: 2-C-methyl-D-erythritol 4-phosphate cytidylyltransferase (237 aa).

It belongs to the IspD/TarI cytidylyltransferase family. IspD subfamily. Homodimer.

The enzyme catalyses 2-C-methyl-D-erythritol 4-phosphate + CTP + H(+) = 4-CDP-2-C-methyl-D-erythritol + diphosphate. Its pathway is isoprenoid biosynthesis; isopentenyl diphosphate biosynthesis via DXP pathway; isopentenyl diphosphate from 1-deoxy-D-xylulose 5-phosphate: step 2/6. Functionally, catalyzes the formation of 4-diphosphocytidyl-2-C-methyl-D-erythritol from CTP and 2-C-methyl-D-erythritol 4-phosphate (MEP). This Pectobacterium atrosepticum (strain SCRI 1043 / ATCC BAA-672) (Erwinia carotovora subsp. atroseptica) protein is 2-C-methyl-D-erythritol 4-phosphate cytidylyltransferase.